Reading from the N-terminus, the 122-residue chain is Ribosome-binding factor A (122 aa).

Belongs to the RbfA family. Monomer. Binds 30S ribosomal subunits, but not 50S ribosomal subunits or 70S ribosomes.

It is found in the cytoplasm. In terms of biological role, one of several proteins that assist in the late maturation steps of the functional core of the 30S ribosomal subunit. Associates with free 30S ribosomal subunits (but not with 30S subunits that are part of 70S ribosomes or polysomes). Required for efficient processing of 16S rRNA. May interact with the 5'-terminal helix region of 16S rRNA. The protein is Ribosome-binding factor A of Streptococcus agalactiae serotype III (strain NEM316).